A 142-amino-acid polypeptide reads, in one-letter code: Large ribosomal subunit protein uL11 (142 aa).

Belongs to the universal ribosomal protein uL11 family. In terms of assembly, part of the ribosomal stalk of the 50S ribosomal subunit. Interacts with L10 and the large rRNA to form the base of the stalk. L10 forms an elongated spine to which L12 dimers bind in a sequential fashion forming a multimeric L10(L12)X complex. One or more lysine residues are methylated.

In terms of biological role, forms part of the ribosomal stalk which helps the ribosome interact with GTP-bound translation factors. The protein is Large ribosomal subunit protein uL11 of Serratia marcescens.